Here is a 421-residue protein sequence, read N- to C-terminus: MKKIVINGGKRISGTIPISGAKNSVVALIPATILANDVVTLEGVPDISDVASLVEIMEIMGAKIERNLEEGRLVIDTRSVVSRPLPYGKINSLRASYYFNGALLGRFGQATVGLPGGCDLGPRPTDLHDKAFKALGAKKIQEEEAEHLEVIGDSLVGTTIYMDVVSVGATINTMLAASRAKGLTIIENAAREPEIIDVATLINNMGAQVRGAGTDIIRITGVDEMHGAQHTVIPDRIEAGTYLALAAAMGDGVIIENVIYEHLESFIAKLEEMGVGLTIREDSIEVHKSENLKSVNITSVPYPGFATDLQQPITPLLLKAKGRGSIVDTIYQKRVNHVPELARMGANISVLDDRIIYDAPNELTGSCVQATDLRAGAALVTAGIIASGTTKISNIEFILRGYDHIIEKLTAVGVDIQLIEE.

Phosphoenolpyruvate is bound at residue 22–23; that stretch reads KN. Residue R94 participates in UDP-N-acetyl-alpha-D-glucosamine binding. The Proton donor role is filled by C118. C118 carries the post-translational modification 2-(S-cysteinyl)pyruvic acid O-phosphothioketal. 2 residues coordinate UDP-N-acetyl-alpha-D-glucosamine: D308 and I330.

It belongs to the EPSP synthase family. MurA subfamily.

Its subcellular location is the cytoplasm. The catalysed reaction is phosphoenolpyruvate + UDP-N-acetyl-alpha-D-glucosamine = UDP-N-acetyl-3-O-(1-carboxyvinyl)-alpha-D-glucosamine + phosphate. It functions in the pathway cell wall biogenesis; peptidoglycan biosynthesis. In terms of biological role, cell wall formation. Adds enolpyruvyl to UDP-N-acetylglucosamine. This chain is UDP-N-acetylglucosamine 1-carboxyvinyltransferase 2, found in Lactococcus lactis subsp. lactis (strain IL1403) (Streptococcus lactis).